The primary structure comprises 292 residues: Protoheme IX farnesyltransferase (292 aa).

Transmembrane regions (helical) follow at residues 11 to 31 (FGIV…GFQI), 37 to 57 (WKIF…SLAL), 85 to 105 (AAAG…LFKL), 108 to 128 (VAGW…TLWW), 133 to 153 (VFAA…GYAV), 163 to 183 (SLYL…VLAI), 199 to 219 (VALG…VYVG), 223 to 243 (AAPM…PFVF), and 261 to 281 (WLAF…IPVI).

The protein belongs to the UbiA prenyltransferase family. Protoheme IX farnesyltransferase subfamily.

The protein localises to the cell inner membrane. It catalyses the reaction heme b + (2E,6E)-farnesyl diphosphate + H2O = Fe(II)-heme o + diphosphate. The protein operates within porphyrin-containing compound metabolism; heme O biosynthesis; heme O from protoheme: step 1/1. Its function is as follows. Converts heme B (protoheme IX) to heme O by substitution of the vinyl group on carbon 2 of heme B porphyrin ring with a hydroxyethyl farnesyl side group. In Bdellovibrio bacteriovorus (strain ATCC 15356 / DSM 50701 / NCIMB 9529 / HD100), this protein is Protoheme IX farnesyltransferase.